Here is a 391-residue protein sequence, read N- to C-terminus: MESETEPEPVTLLVKSPNQRHRDLELSGDRGWSVGHLKAHLSRVYPERPRPEDQRLIYSGKLLLDHQCLRDLLPKQEKRHVLHLVCNVKSPSKMPEINAKVAESTEEPAGSNRGQYPEDSSSDGLRQREVLRNLSSPGWENISRPEAAQQAFQGLGPGFSGYTPYGWLQLSWFQQIYARQYYMQYLAATAASGAFVPPPSAQEIPVVSAPAPAPIHNQFPAENQPANQNAAPQVVVNPGANQNLRMNAQGGPIVEEDDEINRDWLDWTYSAATFSVFLSILYFYSSLSRFLMVMGATVVMYLHHVGWFPFRPRPVQNFPNDGPPPDVVNQDPNNNLQEGTDPETEDPNHLPPDRDVLDGEQTSPSFMSTAWLVFKTFFASLLPEGPPAIAN.

Met1 carries the N-acetylmethionine modification. The Cytoplasmic portion of the chain corresponds to 1–263 (MESETEPEPV…VEEDDEINRD (263 aa)). One can recognise a Ubiquitin-like domain in the interval 10–72 (VTLLVKSPNQ…LLDHQCLRDL (63 aa)). The segment at 100–126 (KVAESTEEPAGSNRGQYPEDSSSDGLR) is disordered. Residues 112-124 (NRGQYPEDSSSDG) are compositionally biased toward polar residues. The interval 115 to 200 (QYPEDSSSDG…ASGAFVPPPS (86 aa)) is interaction with UBQLN1. At Ser135 the chain carries Phosphoserine. Residues 170 to 190 (LSWFQQIYARQYYMQYLAATA) form an interaction with SYVN1 region. A helical membrane pass occupies residues 264–284 (WLDWTYSAATFSVFLSILYFY). Over 285-289 (SSLSR) the chain is Lumenal. Residues 290-310 (FLMVMGATVVMYLHHVGWFPF) traverse the membrane as a helical segment. Residues 311–391 (RPRPVQNFPN…LPEGPPAIAN (81 aa)) are Cytoplasmic-facing. Positions 318–359 (FPNDGPPPDVVNQDPNNNLQEGTDPETEDPNHLPPDRDVLDG) are disordered. Over residues 346-357 (DPNHLPPDRDVL) the composition is skewed to basic and acidic residues.

As to quaternary structure, interacts with PSEN1 and PSEN2. Interacts with UBXN6. Interacts with UBQLN1, UBQLN2 and UBQLN4. Component of the HRD1 complex, which comprises at least SYNV1/HRD1, FAM8A1, HERPUD1/HERP, OS9, SEL1L and UBE2J1. FAM8A1 binding to SYNV1 may promote recruitment of HERPUD1 to the HRD1 complex. As to expression, widely expressed; in the brain, expression seems to be restricted to neurons and vascular smooth muscle cells. Present in activated microglia in senile plaques in the brain of patients with Alzheimer disease.

It localises to the endoplasmic reticulum membrane. In terms of biological role, component of the endoplasmic reticulum quality control (ERQC) system also called ER-associated degradation (ERAD) involved in ubiquitin-dependent degradation of misfolded endoplasmic reticulum proteins. Could enhance presenilin-mediated amyloid-beta protein 40 generation. Binds to ubiquilins and this interaction is required for efficient degradation of CD3D via the ERAD pathway. This is Homocysteine-responsive endoplasmic reticulum-resident ubiquitin-like domain member 1 protein (HERPUD1) from Homo sapiens (Human).